The primary structure comprises 187 residues: Large ribosomal subunit protein bL17 (187 aa).

This sequence belongs to the bacterial ribosomal protein bL17 family. As to quaternary structure, part of the 50S ribosomal subunit. Contacts protein L32.

In Rhodococcus opacus (strain B4), this protein is Large ribosomal subunit protein bL17.